Reading from the N-terminus, the 65-residue chain is Weak neurotoxin 6 (65 aa).

5 disulfide bridges follow: Cys3-Cys24, Cys6-Cys11, Cys17-Cys42, Cys46-Cys57, and Cys58-Cys63.

This sequence belongs to the three-finger toxin family. Ancestral subfamily. Orphan group II sub-subfamily. Expressed by the venom gland.

Its subcellular location is the secreted. Functionally, binds with low affinity to muscular (alpha-1-beta-1-delta-epsilon/CHRNA1-CHRNB1-CHRND-CHRNE) and very low affinity to neuronal (alpha-7/CHRNA7) nicotinic acetylcholine receptor (nAChR). This Naja naja (Indian cobra) protein is Weak neurotoxin 6.